The following is a 314-amino-acid chain: Probable serine/threonine-protein kinase WNK11 (314 aa).

Residues 1–22 (MMTCASSDDNESEKDKDSESFV) are disordered. The Protein kinase domain occupies 31 to 289 (GRYGELLGSG…AAELLCDPFF (259 aa)). 111–114 (TEIC) is an ATP binding site. D178 functions as the Proton acceptor in the catalytic mechanism. The interval 295-314 (DDDEDGENNDNNGAGRIVVS) is disordered.

It belongs to the protein kinase superfamily. Ser/Thr protein kinase family. WNK subfamily.

The enzyme catalyses L-seryl-[protein] + ATP = O-phospho-L-seryl-[protein] + ADP + H(+). It catalyses the reaction L-threonyl-[protein] + ATP = O-phospho-L-threonyl-[protein] + ADP + H(+). Its function is as follows. May regulate flowering time by modulating the photoperiod pathway. This Arabidopsis thaliana (Mouse-ear cress) protein is Probable serine/threonine-protein kinase WNK11 (WNK11).